A 656-amino-acid chain; its full sequence is Methylenetetrahydrofolate reductase (NADPH) (656 aa).

Positions 1–46 are disordered; sequence MVNEARGNDSLNPCLEGSASSSSESSKDSSRCSTPGLDPERHERLR. Residues Ser-10, Ser-18, Ser-20, Ser-21, Ser-23, Ser-25, Ser-26, Ser-29, and Ser-30 each carry the phosphoserine modification. Residue Thr-34 is modified to Phosphothreonine. Glu-63 (proton donor/acceptor) is an active-site residue. NAD(+) is bound by residues 63 to 68 and 94 to 95; these read EFFPPR and TW. Phosphothreonine is present on Thr-94. Position 94–95 (94–95) interacts with FAD; that stretch reads TW. Phosphoserine is present on Ser-103. Residues His-127, 157–159, 174–175, Tyr-197, 201–204, Asp-210, and Lys-217 each bind FAD; these read RGD, YA, and HPEA. Substrate is bound at residue Asp-159. Substrate-binding residues include Gln-228, Tyr-321, and Arg-325. Position 394 is a phosphoserine (Ser-394). At Thr-451 the chain carries Phosphothreonine. Residues Asn-456, 461–464, 481–485, Thr-560, and Thr-573 each bind S-adenosyl-L-methionine; these read AAET and TINSQ.

This sequence belongs to the methylenetetrahydrofolate reductase family. In terms of assembly, homodimer. FAD serves as cofactor. Phosphorylation of an N-terminal serine-rich phosphorylation region increases sensitivity to S-adenosylmethionine and inhibition.

The catalysed reaction is (6S)-5-methyl-5,6,7,8-tetrahydrofolate + NADP(+) = (6R)-5,10-methylene-5,6,7,8-tetrahydrofolate + NADPH + H(+). The protein operates within one-carbon metabolism; tetrahydrofolate interconversion. Its activity is regulated as follows. Allosterically regulated by S-adenosylmethionine (SAM). In terms of biological role, catalyzes the conversion of 5,10-methylenetetrahydrofolate to 5-methyltetrahydrofolate, a cosubstrate for homocysteine remethylation to methionine. Represents a key regulatory connection between the folate and methionine cycles. This chain is Methylenetetrahydrofolate reductase (NADPH) (MTHFR), found in Macaca fascicularis (Crab-eating macaque).